Reading from the N-terminus, the 80-residue chain is Small ribosomal subunit protein bS16c (80 aa).

The protein belongs to the bacterial ribosomal protein bS16 family.

Its subcellular location is the plastid. The protein localises to the chloroplast. The chain is Small ribosomal subunit protein bS16c from Lotus japonicus (Lotus corniculatus var. japonicus).